Here is a 358-residue protein sequence, read N- to C-terminus: MNILKKKVLVGMSGGVDSSVAAYLLKEQGYEVIGATMQIWQDDKEFIEREGGCCSLSAVADARRVANKIGIPFYVMNFKDAFKKNVIDYFVDEYMEGRTPNPCVACNKFIKFSSFLDKAMTLGIDYVATGHYAIIEKQNNRYIVRKSEDDKKDQTYALYNLTQFQLERTLMPCGRYKKSEIREIAKKIGLRVHNKKDSQEICFIPDNDHGKYIKNRFPSKVRQGNFVDKSGNVLGTHKGIVYYTIGQRKGLDIALGKPMYVVDINPFRNEVVLGNLDDLLNTELIAKDVNYIPFDNLKEPMEVEAKIRYSQIPSKAVITPMENDKVKVNFTEKQRAITKGQSVVFYKGDLLIGGGIIE.

Residues 11–18 (GMSGGVDS) and Met37 each bind ATP. Cys106 functions as the Nucleophile in the catalytic mechanism. Residues Cys106 and Cys202 are joined by a disulfide bond. Residue Gly130 participates in ATP binding. Positions 152–154 (KDQ) are interaction with tRNA. The Cysteine persulfide intermediate role is filled by Cys202. Positions 308-309 (RY) are interaction with tRNA.

It belongs to the MnmA/TRMU family.

It localises to the cytoplasm. It catalyses the reaction S-sulfanyl-L-cysteinyl-[protein] + uridine(34) in tRNA + AH2 + ATP = 2-thiouridine(34) in tRNA + L-cysteinyl-[protein] + A + AMP + diphosphate + H(+). Its function is as follows. Catalyzes the 2-thiolation of uridine at the wobble position (U34) of tRNA, leading to the formation of s(2)U34. This is tRNA-specific 2-thiouridylase MnmA 2 from Clostridium tetani (strain Massachusetts / E88).